Here is a 768-residue protein sequence, read N- to C-terminus: Pentatricopeptide repeat-containing protein At3g53360, mitochondrial (768 aa).

The transit peptide at 1 to 70 (MATMLRLGAR…SSFKIRLRTY (70 aa)) directs the protein to the mitochondrion. PPR repeat units follow at residues 30–60 (TEEL…AQKN), 66–100 (RLRT…NCKY), 101–131 (DTIL…MPER), 132–166 (NLVS…DLVP), 167–201 (DQFA…ESSS), 202–232 (HLIA…IPMK), 233–267 (DLIS…GVFH), 269–303 (NEYI…ELAG), 304–334 (NAIA…IERP), 335–369 (DTAS…GFIP), 370–404 (DAIS…GFLA), 405–435 (DLTV…FRNN), 437–471 (DSVS…ECEP), 472–506 (DHIT…GLAP), 507–537 (EQFI…MDNR), 538–572 (DVVS…GIEP), 573–608 (NHVT…GISP), and 609–639 (TKEH…MKLE). Positions 644 to 719 (VWKTLLSACK…IPGQSWIEIE (76 aa)) are type E motif. The tract at residues 720–750 (DKIHIFFAEDIFHPERDDIYTVLHNIWSQML) is type E(+) motif.

The protein belongs to the PPR family. PCMP-E subfamily.

It localises to the mitochondrion. This chain is Pentatricopeptide repeat-containing protein At3g53360, mitochondrial (PCMP-E86), found in Arabidopsis thaliana (Mouse-ear cress).